The chain runs to 376 residues: Mitochondrial distribution and morphology protein 34 (376 aa).

The 194-residue stretch at 1-194 folds into the SMP-LTD domain; that stretch reads MSFTFNWPRF…LPGIIHRLSQ (194 aa). Disordered regions lie at residues 207–249 and 286–376; these read SKHP…PKIV and SVPP…LHPS. Positions 218-230 are enriched in acidic residues; it reads EISEPGDYGEEGE. Basic residues predominate over residues 306-318; it reads VKAKRKRTYRLGG. Basic and acidic residues predominate over residues 350-362; the sequence is MDRYFRSYDDHSR.

This sequence belongs to the MDM34 family. Component of the ER-mitochondria encounter structure (ERMES) or MDM complex, composed of MMM1, MDM10, MDM12 and MDM34.

The protein localises to the mitochondrion outer membrane. In terms of biological role, component of the ERMES/MDM complex, which serves as a molecular tether to connect the endoplasmic reticulum (ER) and mitochondria. Components of this complex are involved in the control of mitochondrial shape and protein biogenesis, and function in nonvesicular lipid trafficking between the ER and mitochondria. MDM34 is required for the interaction of the ER-resident membrane protein MMM1 and the outer mitochondrial membrane-resident beta-barrel protein MDM10. The protein is Mitochondrial distribution and morphology protein 34 of Laccaria bicolor (strain S238N-H82 / ATCC MYA-4686) (Bicoloured deceiver).